Reading from the N-terminus, the 423-residue chain is uncharacterized protein (423 aa).

Substrate is bound by residues S51, D138, and N150. Residues 170 to 171 and 214 to 220 each bind ATP; these read TD and TGGMRTK. The region spanning 315–406 is the PUA domain; it reads KGAIIIDENS…EKIHDVLGYS (92 aa).

The protein belongs to the glutamate 5-kinase family.

The protein localises to the cytoplasm. This is an uncharacterized protein from Saccharomyces cerevisiae (strain ATCC 204508 / S288c) (Baker's yeast).